The primary structure comprises 397 residues: Tryptophan synthase beta chain (397 aa).

Lys-88 carries the N6-(pyridoxal phosphate)lysine modification.

This sequence belongs to the TrpB family. Tetramer of two alpha and two beta chains. The cofactor is pyridoxal 5'-phosphate.

It carries out the reaction (1S,2R)-1-C-(indol-3-yl)glycerol 3-phosphate + L-serine = D-glyceraldehyde 3-phosphate + L-tryptophan + H2O. It participates in amino-acid biosynthesis; L-tryptophan biosynthesis; L-tryptophan from chorismate: step 5/5. Functionally, the beta subunit is responsible for the synthesis of L-tryptophan from indole and L-serine. The polypeptide is Tryptophan synthase beta chain (Shewanella amazonensis (strain ATCC BAA-1098 / SB2B)).